The chain runs to 218 residues: 3-isopropylmalate dehydratase small subunit (218 aa).

The protein belongs to the LeuD family. LeuD type 1 subfamily. In terms of assembly, heterodimer of LeuC and LeuD.

It carries out the reaction (2R,3S)-3-isopropylmalate = (2S)-2-isopropylmalate. It participates in amino-acid biosynthesis; L-leucine biosynthesis; L-leucine from 3-methyl-2-oxobutanoate: step 2/4. Functionally, catalyzes the isomerization between 2-isopropylmalate and 3-isopropylmalate, via the formation of 2-isopropylmaleate. The polypeptide is 3-isopropylmalate dehydratase small subunit (Alkalilimnicola ehrlichii (strain ATCC BAA-1101 / DSM 17681 / MLHE-1)).